Here is a 292-residue protein sequence, read N- to C-terminus: Putative OX-2 membrane glycoprotein homolog (292 aa).

Positions 1–18 (MSPLMLRLLPLLCIIISA) are cleaved as a signal peptide. An Ig-like V-type domain is found at 24-136 (PETSPSLVYE…TFTVDNEKTS (113 aa)). The cysteines at positions 42 and 126 are disulfide-linked. Residues Asn-45, Asn-57, Asn-72, and Asn-195 are each glycosylated (N-linked (GlcNAc...) asparagine; by host). The region spanning 147–237 (PIVVLYFRYL…TNQKASALVT (91 aa)) is the Ig-like C2-type domain. Residues 263–283 (VFTWIVPLILILIISVMVLLI) form a helical membrane-spanning segment.

It localises to the host membrane. The chain is Putative OX-2 membrane glycoprotein homolog (U85) from Human herpesvirus 6B (strain Z29) (HHV-6 variant B).